Here is a 431-residue protein sequence, read N- to C-terminus: UDP-N-acetylglucosamine 1-carboxyvinyltransferase (431 aa).

A phosphoenolpyruvate-binding site is contributed by 22–23 (KN). Position 92 (R92) interacts with UDP-N-acetyl-alpha-D-glucosamine. D116 (proton donor) is an active-site residue. UDP-N-acetyl-alpha-D-glucosamine is bound by residues 121 to 125 (RPIDQ), D307, and I330.

It belongs to the EPSP synthase family. MurA subfamily.

It localises to the cytoplasm. It catalyses the reaction phosphoenolpyruvate + UDP-N-acetyl-alpha-D-glucosamine = UDP-N-acetyl-3-O-(1-carboxyvinyl)-alpha-D-glucosamine + phosphate. The protein operates within cell wall biogenesis; peptidoglycan biosynthesis. Cell wall formation. Adds enolpyruvyl to UDP-N-acetylglucosamine. The polypeptide is UDP-N-acetylglucosamine 1-carboxyvinyltransferase (Lactobacillus acidophilus (strain ATCC 700396 / NCK56 / N2 / NCFM)).